We begin with the raw amino-acid sequence, 622 residues long: FERM domain-containing protein 6 (622 aa).

In terms of domain architecture, FERM spans 16–328 (RRVCIFLPND…NSHRLYMNLQ (313 aa)). A disordered region spans residues 357-452 (LDMDPLEKRS…KDRLEEDSQD (96 aa)). 2 stretches are compositionally biased toward low complexity: residues 384 to 395 (HSTASHSSSHTS) and 425 to 438 (SSMTSHGSSHTSGV). A Phosphoserine modification is found at serine 522. Threonine 523 is subject to Phosphothreonine. 3 positions are modified to phosphoserine: serine 525, serine 542, and serine 544.

It localises to the cytoplasm. It is found in the cell membrane. This chain is FERM domain-containing protein 6 (Frmd6), found in Mus musculus (Mouse).